The primary structure comprises 309 residues: Homoserine kinase (309 aa).

91–101 (PIGSGLGSSAC) provides a ligand contact to ATP.

Belongs to the GHMP kinase family. Homoserine kinase subfamily.

It is found in the cytoplasm. The catalysed reaction is L-homoserine + ATP = O-phospho-L-homoserine + ADP + H(+). It participates in amino-acid biosynthesis; L-threonine biosynthesis; L-threonine from L-aspartate: step 4/5. In terms of biological role, catalyzes the ATP-dependent phosphorylation of L-homoserine to L-homoserine phosphate. This is Homoserine kinase from Salmonella dublin (strain CT_02021853).